We begin with the raw amino-acid sequence, 195 residues long: Probable GTP-binding protein EngB (195 aa).

The EngB-type G domain maps to 22–195 (GLPEIALAGR…WGAIKKMISR (174 aa)). GTP is bound by residues 30 to 37 (GRSNVGKS), 57 to 61 (GKTQT), 75 to 78 (DVPG), 142 to 145 (TKAD), and 174 to 176 (FSS). Residues Ser-37 and Thr-59 each coordinate Mg(2+).

The protein belongs to the TRAFAC class TrmE-Era-EngA-EngB-Septin-like GTPase superfamily. EngB GTPase family. Mg(2+) serves as cofactor.

Necessary for normal cell division and for the maintenance of normal septation. In Bacillus velezensis (strain DSM 23117 / BGSC 10A6 / LMG 26770 / FZB42) (Bacillus amyloliquefaciens subsp. plantarum), this protein is Probable GTP-binding protein EngB.